The primary structure comprises 254 residues: Glycerol operon regulatory protein (254 aa).

The region spanning 5–67 (IQSLERAAAM…PASGRYQLGA (63 aa)) is the HTH iclR-type domain. A DNA-binding region (H-T-H motif) is located at residues 27 to 46 (LSDIASTLGLAKGTAHGILR). One can recognise an IclR-ED domain in the interval 82–251 (LRARALVWTD…AAAVSRDLGA (170 aa)).

May be an activator protein for the gylABX operon. This is Glycerol operon regulatory protein (gylR) from Streptomyces griseus.